Reading from the N-terminus, the 180-residue chain is Crossover junction endodeoxyribonuclease RuvC (180 aa).

Catalysis depends on residues aspartate 7, glutamate 66, and aspartate 138. Residues aspartate 7, glutamate 66, and aspartate 138 each contribute to the Mg(2+) site.

This sequence belongs to the RuvC family. In terms of assembly, homodimer which binds Holliday junction (HJ) DNA. The HJ becomes 2-fold symmetrical on binding to RuvC with unstacked arms; it has a different conformation from HJ DNA in complex with RuvA. In the full resolvosome a probable DNA-RuvA(4)-RuvB(12)-RuvC(2) complex forms which resolves the HJ. Requires Mg(2+) as cofactor.

It localises to the cytoplasm. It carries out the reaction Endonucleolytic cleavage at a junction such as a reciprocal single-stranded crossover between two homologous DNA duplexes (Holliday junction).. In terms of biological role, the RuvA-RuvB-RuvC complex processes Holliday junction (HJ) DNA during genetic recombination and DNA repair. Endonuclease that resolves HJ intermediates. Cleaves cruciform DNA by making single-stranded nicks across the HJ at symmetrical positions within the homologous arms, yielding a 5'-phosphate and a 3'-hydroxyl group; requires a central core of homology in the junction. The consensus cleavage sequence is 5'-(A/T)TT(C/G)-3'. Cleavage occurs on the 3'-side of the TT dinucleotide at the point of strand exchange. HJ branch migration catalyzed by RuvA-RuvB allows RuvC to scan DNA until it finds its consensus sequence, where it cleaves and resolves the cruciform DNA. The chain is Crossover junction endodeoxyribonuclease RuvC from Paraburkholderia xenovorans (strain LB400).